A 175-amino-acid chain; its full sequence is RNA pyrophosphohydrolase (175 aa).

Positions 8–159 constitute a Nudix hydrolase domain; the sequence is PYRTCVGMML…KRPVYERVVK (152 aa). The short motif at 47–68 is the Nudix box element; that stretch reads GGVDPGEDPWTAAKRELYEETS.

The protein belongs to the Nudix hydrolase family. RppH subfamily. It depends on a divalent metal cation as a cofactor.

In terms of biological role, accelerates the degradation of transcripts by removing pyrophosphate from the 5'-end of triphosphorylated RNA, leading to a more labile monophosphorylated state that can stimulate subsequent ribonuclease cleavage. In Rhodopseudomonas palustris (strain BisB18), this protein is RNA pyrophosphohydrolase.